The primary structure comprises 388 residues: Succinate--CoA ligase [ADP-forming] subunit beta (388 aa).

One can recognise an ATP-grasp domain in the interval 9–244 (KGILSGFDVR…PHEYSEEELE (236 aa)). ATP is bound by residues K46, 53 to 55 (GRG), E99, V102, and E107. 2 residues coordinate Mg(2+): N199 and D213. Substrate is bound by residues N264 and 320 to 322 (GIM).

The protein belongs to the succinate/malate CoA ligase beta subunit family. In terms of assembly, heterotetramer of two alpha and two beta subunits. Requires Mg(2+) as cofactor.

The catalysed reaction is succinate + ATP + CoA = succinyl-CoA + ADP + phosphate. It carries out the reaction GTP + succinate + CoA = succinyl-CoA + GDP + phosphate. Its pathway is carbohydrate metabolism; tricarboxylic acid cycle; succinate from succinyl-CoA (ligase route): step 1/1. Functionally, succinyl-CoA synthetase functions in the citric acid cycle (TCA), coupling the hydrolysis of succinyl-CoA to the synthesis of either ATP or GTP and thus represents the only step of substrate-level phosphorylation in the TCA. The beta subunit provides nucleotide specificity of the enzyme and binds the substrate succinate, while the binding sites for coenzyme A and phosphate are found in the alpha subunit. The protein is Succinate--CoA ligase [ADP-forming] subunit beta of Anaplasma phagocytophilum (strain HZ).